A 200-amino-acid chain; its full sequence is 5'(3')-deoxyribonucleotidase, cytosolic type (200 aa).

The active-site Nucleophile is the D12. Positions 12 and 14 each coordinate Mg(2+). D14 acts as the Proton donor in catalysis. Positions 20, 46, 67, and 101 each coordinate substrate. T102 is modified (phosphothreonine). Residue K136 participates in substrate binding. Residue D147 participates in Mg(2+) binding. At S184 the chain carries Phosphoserine.

This sequence belongs to the 5'(3')-deoxyribonucleotidase family. As to quaternary structure, homodimer. Mg(2+) serves as cofactor.

It is found in the cytoplasm. Functionally, dephosphorylates the 5' and 2'(3')-phosphates of deoxyribonucleotides, with a preference for dUMP and dTMP, intermediate activity towards dGMP, and low activity towards dCMP and dAMP. The chain is 5'(3')-deoxyribonucleotidase, cytosolic type (Nt5c) from Mus musculus (Mouse).